We begin with the raw amino-acid sequence, 647 residues long: DNA ligase (647 aa).

Residues 30 to 34, 79 to 80, and Glu105 contribute to the NAD(+) site; these read DEEYD and SM. Lys107 acts as the N6-AMP-lysine intermediate in catalysis. NAD(+) is bound by residues Arg128, Glu162, and Lys301. Zn(2+) contacts are provided by Cys395, Cys398, Cys411, and Cys416. In terms of domain architecture, BRCT spans 570 to 647; that stretch reads KSDGVIFGKT…ESAFNELVKE (78 aa).

The protein belongs to the NAD-dependent DNA ligase family. LigA subfamily. It depends on Mg(2+) as a cofactor. The cofactor is Mn(2+).

It carries out the reaction NAD(+) + (deoxyribonucleotide)n-3'-hydroxyl + 5'-phospho-(deoxyribonucleotide)m = (deoxyribonucleotide)n+m + AMP + beta-nicotinamide D-nucleotide.. Functionally, DNA ligase that catalyzes the formation of phosphodiester linkages between 5'-phosphoryl and 3'-hydroxyl groups in double-stranded DNA using NAD as a coenzyme and as the energy source for the reaction. It is essential for DNA replication and repair of damaged DNA. In Campylobacter jejuni (strain RM1221), this protein is DNA ligase.